We begin with the raw amino-acid sequence, 390 residues long: 8-amino-7-oxononanoate synthase (390 aa).

Position 19 (Arg-19) interacts with substrate. 106 to 107 (GY) provides a ligand contact to pyridoxal 5'-phosphate. His-131 serves as a coordination point for substrate. Ser-176, His-204, and Thr-233 together coordinate pyridoxal 5'-phosphate. Lys-236 is subject to N6-(pyridoxal phosphate)lysine. Position 350 (Thr-350) interacts with substrate.

The protein belongs to the class-II pyridoxal-phosphate-dependent aminotransferase family. BioF subfamily. In terms of assembly, homodimer. The cofactor is pyridoxal 5'-phosphate.

It carries out the reaction 6-carboxyhexanoyl-[ACP] + L-alanine + H(+) = (8S)-8-amino-7-oxononanoate + holo-[ACP] + CO2. The protein operates within cofactor biosynthesis; biotin biosynthesis. Its function is as follows. Catalyzes the decarboxylative condensation of pimeloyl-[acyl-carrier protein] and L-alanine to produce 8-amino-7-oxononanoate (AON), [acyl-carrier protein], and carbon dioxide. This is 8-amino-7-oxononanoate synthase from Pseudomonas putida (strain ATCC 700007 / DSM 6899 / JCM 31910 / BCRC 17059 / LMG 24140 / F1).